A 650-amino-acid polypeptide reads, in one-letter code: Phosphatidylinositol-3,5-bisphosphate 3-phosphatase MTMR14 (650 aa).

Positions 1–27 (MAGARAAAAAASAGSSASSGNQPPQEL) are disordered. Lysine 194 is modified (N6-acetyllysine). A glycan (N-linked (GlcNAc...) asparagine) is linked at asparagine 226. The active-site Phosphocysteine intermediate is cysteine 330. A 1,2-diacyl-sn-glycero-3-phospho-(1D-myo-inositol-3,5-bisphosphate) contacts are provided by glycine 333, tryptophan 334, aspartate 335, arginine 336, and arginine 382. The a 1,2-diacyl-sn-glycero-3-phospho-(1D-myo-inositol-3-phosphate) site is built by glycine 333, tryptophan 334, aspartate 335, arginine 336, and arginine 382. The segment at 476–546 (AAWRKSHSSS…PRSVDHPLPG (71 aa)) is disordered. Position 518 is a phosphoserine (serine 518). Residue asparagine 519 is glycosylated (N-linked (GlcNAc...) asparagine). Phosphoserine occurs at positions 530, 580, and 624. Omega-N-methylarginine is present on arginine 638.

It belongs to the protein-tyrosine phosphatase family. Non-receptor class myotubularin subfamily. In terms of tissue distribution, expressed in various tissues, including heart, skeletal muscle, placenta, liver, lung, kidney and pancreas.

The protein localises to the cytoplasm. The enzyme catalyses a 1,2-diacyl-sn-glycero-3-phospho-(1D-myo-inositol-3,5-bisphosphate) + H2O = a 1,2-diacyl-sn-glycero-3-phospho-(1D-myo-inositol-5-phosphate) + phosphate. It carries out the reaction a 1,2-diacyl-sn-glycero-3-phospho-(1D-myo-inositol-3-phosphate) + H2O = a 1,2-diacyl-sn-glycero-3-phospho-(1D-myo-inositol) + phosphate. Its function is as follows. Lipid phosphatase that specifically dephosphorylates the D-3 position of phosphatidylinositol 3-phosphate and phosphatidylinositol 3,5-bisphosphate, generating phosphatidylinositol and phosphatidylinositol 5-phosphate. In Homo sapiens (Human), this protein is Phosphatidylinositol-3,5-bisphosphate 3-phosphatase MTMR14.